A 214-amino-acid chain; its full sequence is Adenylate kinase (214 aa).

Residue 10–15 coordinates ATP; sequence GAGKGT. Residues 30 to 59 form an NMP region; that stretch reads STGDMLRAAIKAGTELGKQAKSVIDAGQLV. Residues Thr31, Arg36, 57–59, 85–88, and Gln92 each bind AMP; these read QLV and GFPR. The tract at residues 122–159 is LID; it reads GRRAHLPSGRTYHVVYNPPKEEGKDDETGEPLVIREDD. ATP-binding positions include Arg123 and 132 to 133; that span reads TY. Arg156 and Arg167 together coordinate AMP. An ATP-binding site is contributed by Lys200.

It belongs to the adenylate kinase family. As to quaternary structure, monomer.

The protein resides in the cytoplasm. The enzyme catalyses AMP + ATP = 2 ADP. Its pathway is purine metabolism; AMP biosynthesis via salvage pathway; AMP from ADP: step 1/1. Catalyzes the reversible transfer of the terminal phosphate group between ATP and AMP. Plays an important role in cellular energy homeostasis and in adenine nucleotide metabolism. This chain is Adenylate kinase, found in Aliivibrio fischeri (strain ATCC 700601 / ES114) (Vibrio fischeri).